The following is a 161-amino-acid chain: ATP synthase subunit b 2 (161 aa).

Residues 13-33 (IVWLVIALVAMYFVMSRLAIP) form a helical membrane-spanning segment.

Belongs to the ATPase B chain family. As to quaternary structure, F-type ATPases have 2 components, F(1) - the catalytic core - and F(0) - the membrane proton channel. F(1) has five subunits: alpha(3), beta(3), gamma(1), delta(1), epsilon(1). F(0) has three main subunits: a(1), b(2) and c(10-14). The alpha and beta chains form an alternating ring which encloses part of the gamma chain. F(1) is attached to F(0) by a central stalk formed by the gamma and epsilon chains, while a peripheral stalk is formed by the delta and b chains.

It localises to the cell inner membrane. F(1)F(0) ATP synthase produces ATP from ADP in the presence of a proton or sodium gradient. F-type ATPases consist of two structural domains, F(1) containing the extramembraneous catalytic core and F(0) containing the membrane proton channel, linked together by a central stalk and a peripheral stalk. During catalysis, ATP synthesis in the catalytic domain of F(1) is coupled via a rotary mechanism of the central stalk subunits to proton translocation. Functionally, component of the F(0) channel, it forms part of the peripheral stalk, linking F(1) to F(0). The b'-subunit is a diverged and duplicated form of b found in plants and photosynthetic bacteria. The sequence is that of ATP synthase subunit b 2 (atpF2) from Rhodospirillum rubrum (strain ATCC 11170 / ATH 1.1.1 / DSM 467 / LMG 4362 / NCIMB 8255 / S1).